Reading from the N-terminus, the 497-residue chain is Ethanolamine-phosphate phospho-lyase (497 aa).

At Lys278 the chain carries N6-(pyridoxal phosphate)lysine. Residues 440-497 (TGAETESGISKNTPCRTKMPKEAQSELLRDSSLESRENPSQKRNGLCTDSLLSKRLRT) are disordered. The span at 458 to 479 (MPKEAQSELLRDSSLESRENPS) shows a compositional bias: basic and acidic residues.

The protein belongs to the class-III pyridoxal-phosphate-dependent aminotransferase family. In terms of assembly, homotetramer. Requires pyridoxal 5'-phosphate as cofactor.

The protein resides in the mitochondrion. It catalyses the reaction phosphoethanolamine + H2O = acetaldehyde + NH4(+) + phosphate. In terms of biological role, catalyzes the pyridoxal-phosphate-dependent breakdown of phosphoethanolamine, converting it to ammonia, inorganic phosphate and acetaldehyde. The protein is Ethanolamine-phosphate phospho-lyase (ETNPPL) of Bos taurus (Bovine).